A 249-amino-acid chain; its full sequence is Serine acetyltransferase (249 aa).

The protein belongs to the transferase hexapeptide repeat family.

It localises to the cytoplasm. The enzyme catalyses L-serine + acetyl-CoA = O-acetyl-L-serine + CoA. It functions in the pathway amino-acid biosynthesis; L-cysteine biosynthesis; L-cysteine from L-serine: step 1/2. This Synechocystis sp. (strain ATCC 27184 / PCC 6803 / Kazusa) protein is Serine acetyltransferase (cysE).